Reading from the N-terminus, the 239-residue chain is 1-(5-phosphoribosyl)-5-[(5-phosphoribosylamino)methylideneamino] imidazole-4-carboxamide isomerase (239 aa).

D12 serves as the catalytic Proton acceptor. D133 (proton donor) is an active-site residue.

The protein belongs to the HisA/HisF family.

The protein resides in the cytoplasm. It catalyses the reaction 1-(5-phospho-beta-D-ribosyl)-5-[(5-phospho-beta-D-ribosylamino)methylideneamino]imidazole-4-carboxamide = 5-[(5-phospho-1-deoxy-D-ribulos-1-ylimino)methylamino]-1-(5-phospho-beta-D-ribosyl)imidazole-4-carboxamide. Its pathway is amino-acid biosynthesis; L-histidine biosynthesis; L-histidine from 5-phospho-alpha-D-ribose 1-diphosphate: step 4/9. In Sulfurihydrogenibium sp. (strain YO3AOP1), this protein is 1-(5-phosphoribosyl)-5-[(5-phosphoribosylamino)methylideneamino] imidazole-4-carboxamide isomerase.